Here is a 357-residue protein sequence, read N- to C-terminus: Elongation factor Ts (357 aa).

The interval 82–85 is involved in Mg(2+) ion dislocation from EF-Tu; it reads TDFV.

This sequence belongs to the EF-Ts family.

Its subcellular location is the cytoplasm. In terms of biological role, associates with the EF-Tu.GDP complex and induces the exchange of GDP to GTP. It remains bound to the aminoacyl-tRNA.EF-Tu.GTP complex up to the GTP hydrolysis stage on the ribosome. This chain is Elongation factor Ts, found in Campylobacter jejuni (strain RM1221).